Reading from the N-terminus, the 332-residue chain is Oxygen-dependent coproporphyrinogen-III oxidase (332 aa).

Ser-119 serves as a coordination point for coproporphyrinogen III. The active-site Proton donor is His-133. Coproporphyrinogen III-binding positions include 135 to 137 and 284 to 285; these read NVR and GR.

The protein belongs to the aerobic coproporphyrinogen-III oxidase family. In terms of assembly, homodimer.

It catalyses the reaction coproporphyrinogen III + O2 + 2 H(+) = protoporphyrinogen IX + 2 CO2 + 2 H2O. The protein operates within porphyrin-containing compound metabolism; protoporphyrin-IX biosynthesis; protoporphyrinogen-IX from coproporphyrinogen-III (O2 route): step 1/1. In terms of biological role, involved in the heme biosynthesis. Catalyzes the aerobic oxidative decarboxylation of propionate groups of rings A and B of coproporphyrinogen-III to yield the vinyl groups in protoporphyrinogen-IX. The polypeptide is Oxygen-dependent coproporphyrinogen-III oxidase (cpox) (Dictyostelium discoideum (Social amoeba)).